Consider the following 283-residue polypeptide: Bifunctional protein FolD (283 aa).

NADP(+) contacts are provided by residues 164-166 (GRS) and S189.

This sequence belongs to the tetrahydrofolate dehydrogenase/cyclohydrolase family. In terms of assembly, homodimer.

It catalyses the reaction (6R)-5,10-methylene-5,6,7,8-tetrahydrofolate + NADP(+) = (6R)-5,10-methenyltetrahydrofolate + NADPH. The enzyme catalyses (6R)-5,10-methenyltetrahydrofolate + H2O = (6R)-10-formyltetrahydrofolate + H(+). The protein operates within one-carbon metabolism; tetrahydrofolate interconversion. Functionally, catalyzes the oxidation of 5,10-methylenetetrahydrofolate to 5,10-methenyltetrahydrofolate and then the hydrolysis of 5,10-methenyltetrahydrofolate to 10-formyltetrahydrofolate. The protein is Bifunctional protein FolD of Lactobacillus acidophilus (strain ATCC 700396 / NCK56 / N2 / NCFM).